A 129-amino-acid polypeptide reads, in one-letter code: Small ribosomal subunit protein uS11 (129 aa).

The protein belongs to the universal ribosomal protein uS11 family. In terms of assembly, part of the 30S ribosomal subunit. Interacts with proteins S7 and S18. Binds to IF-3.

In terms of biological role, located on the platform of the 30S subunit, it bridges several disparate RNA helices of the 16S rRNA. Forms part of the Shine-Dalgarno cleft in the 70S ribosome. In Nitrosospira multiformis (strain ATCC 25196 / NCIMB 11849 / C 71), this protein is Small ribosomal subunit protein uS11.